Consider the following 119-residue polypeptide: Large ribosomal subunit protein bL19 (119 aa).

The protein belongs to the bacterial ribosomal protein bL19 family.

In terms of biological role, this protein is located at the 30S-50S ribosomal subunit interface and may play a role in the structure and function of the aminoacyl-tRNA binding site. This is Large ribosomal subunit protein bL19 from Pseudoalteromonas atlantica (strain T6c / ATCC BAA-1087).